Consider the following 367-residue polypeptide: MTARIRVAVVYGGRSSEHAISCVSAGSILRNLDPQRFEVVPVGITPEGSWVLTDGRPETLAITDGALPGVSGSSGTELALAADPGRRGQLLSLGDAAGDVLAAVDVVFPVLHGPYGEDGTIQGLLELAGVPYVGAGVLASAAGMDKEFTKKLLTAAGLPVGDHVVLRPREATVSLEDRERLGLPVFVKPSRGGSSIGVSRVTAWDALPAAIELARRHDPKVIVEAAIPGRELECGVLEFPDGHLEASTVGEIRVAGVRGREDGFYDFETKYLDDGAELDVPAKVDDAIAEAVRGLAIRAFDAIDCQGLARVDFFLTDAGPVINEINTMPGFTTISMYPRMWAASGIDYPTLLATMVETAIARGTGLR.

Residues 150–357 form the ATP-grasp domain; the sequence is KKLLTAAGLP…YPTLLATMVE (208 aa). 178-233 contacts ATP; it reads RERLGLPVFVKPSRGGSSIGVSRVTAWDALPAAIELARRHDPKVIVEAAIPGRELE. Positions 312, 324, and 326 each coordinate Mg(2+).

Belongs to the D-alanine--D-alanine ligase family. Requires Mg(2+) as cofactor. Mn(2+) serves as cofactor.

Its subcellular location is the cytoplasm. It catalyses the reaction 2 D-alanine + ATP = D-alanyl-D-alanine + ADP + phosphate + H(+). The protein operates within cell wall biogenesis; peptidoglycan biosynthesis. Cell wall formation. The polypeptide is D-alanine--D-alanine ligase (Mycolicibacterium vanbaalenii (strain DSM 7251 / JCM 13017 / BCRC 16820 / KCTC 9966 / NRRL B-24157 / PYR-1) (Mycobacterium vanbaalenii)).